The sequence spans 179 residues: ATP synthase subunit delta (179 aa).

The protein belongs to the ATPase delta chain family. In terms of assembly, F-type ATPases have 2 components, F(1) - the catalytic core - and F(0) - the membrane proton channel. F(1) has five subunits: alpha(3), beta(3), gamma(1), delta(1), epsilon(1). F(0) has three main subunits: a(1), b(2) and c(10-14). The alpha and beta chains form an alternating ring which encloses part of the gamma chain. F(1) is attached to F(0) by a central stalk formed by the gamma and epsilon chains, while a peripheral stalk is formed by the delta and b chains.

The protein localises to the cell membrane. Its function is as follows. F(1)F(0) ATP synthase produces ATP from ADP in the presence of a proton or sodium gradient. F-type ATPases consist of two structural domains, F(1) containing the extramembraneous catalytic core and F(0) containing the membrane proton channel, linked together by a central stalk and a peripheral stalk. During catalysis, ATP synthesis in the catalytic domain of F(1) is coupled via a rotary mechanism of the central stalk subunits to proton translocation. This protein is part of the stalk that links CF(0) to CF(1). It either transmits conformational changes from CF(0) to CF(1) or is implicated in proton conduction. This is ATP synthase subunit delta from Listeria innocua serovar 6a (strain ATCC BAA-680 / CLIP 11262).